A 205-amino-acid chain; its full sequence is Probable thymidylate kinase (205 aa).

7 to 14 (GIDGAGKS) serves as a coordination point for ATP.

It belongs to the thymidylate kinase family.

It carries out the reaction dTMP + ATP = dTDP + ADP. This Thermococcus kodakarensis (strain ATCC BAA-918 / JCM 12380 / KOD1) (Pyrococcus kodakaraensis (strain KOD1)) protein is Probable thymidylate kinase.